A 349-amino-acid chain; its full sequence is D-alanine--D-alanine ligase (349 aa).

The 204-residue stretch at 132 to 335 folds into the ATP-grasp domain; the sequence is KHVFEAVGVP…YSDLIEKLVD (204 aa). Residue 162–217 coordinates ATP; sequence VEKLDFPVFVKPANMGSSVGISKVDDLADLQPALSEAYKYDNRVVIEQGVDAREIE. Mg(2+) is bound by residues Asp-289, Glu-302, and Asn-304.

It belongs to the D-alanine--D-alanine ligase family. Requires Mg(2+) as cofactor. Mn(2+) is required as a cofactor.

It localises to the cytoplasm. The catalysed reaction is 2 D-alanine + ATP = D-alanyl-D-alanine + ADP + phosphate + H(+). It functions in the pathway cell wall biogenesis; peptidoglycan biosynthesis. Cell wall formation. This is D-alanine--D-alanine ligase from Lactococcus lactis subsp. cremoris (strain MG1363).